Reading from the N-terminus, the 330-residue chain is DNA primase small subunit PriS (330 aa).

Catalysis depends on residues Asp101 and Asp103. Residues Cys116, Cys119, Cys128, and Asp131 each contribute to the Zn(2+) site. Residue Asp235 is part of the active site.

The protein belongs to the eukaryotic-type primase small subunit family. As to quaternary structure, heterodimer of a small subunit (PriS) and a large subunit (PriL). The cofactor is Mg(2+). Mn(2+) is required as a cofactor.

Catalytic subunit of DNA primase, an RNA polymerase that catalyzes the synthesis of short RNA molecules used as primers for DNA polymerase during DNA replication. The small subunit contains the primase catalytic core and has DNA synthesis activity on its own. Binding to the large subunit stabilizes and modulates the activity, increasing the rate of DNA synthesis while decreasing the length of the DNA fragments, and conferring RNA synthesis capability. The DNA polymerase activity may enable DNA primase to also catalyze primer extension after primer synthesis. May also play a role in DNA repair. Possesses a template-independent 3'-terminal nucleotidyl transferase activity. The chain is DNA primase small subunit PriS from Saccharolobus solfataricus (strain ATCC 35092 / DSM 1617 / JCM 11322 / P2) (Sulfolobus solfataricus).